Consider the following 259-residue polypeptide: Ribose-5-phosphate isomerase (259 aa).

This sequence belongs to the ribose 5-phosphate isomerase family.

The protein localises to the cytoplasm. The enzyme catalyses aldehydo-D-ribose 5-phosphate = D-ribulose 5-phosphate. The protein operates within carbohydrate degradation; pentose phosphate pathway; D-ribose 5-phosphate from D-ribulose 5-phosphate (non-oxidative stage): step 1/1. In Vanderwaltozyma polyspora (strain ATCC 22028 / DSM 70294 / BCRC 21397 / CBS 2163 / NBRC 10782 / NRRL Y-8283 / UCD 57-17) (Kluyveromyces polysporus), this protein is Ribose-5-phosphate isomerase (RKI1).